The following is a 950-amino-acid chain: Nonsense-mediated mRNA decay factor SMG8 (950 aa).

2 disordered regions span residues 560–607 and 624–651; these read HTGK…LSPT and NESQASSEQLSNSEQNSTSSGTSSADTE. Over residues 568–582 the composition is skewed to acidic residues; sequence QDEDGEEDAEDEEGQ. A compositionally biased stretch (polar residues) spans 593–607; it reads QNTASNGCSQPLSPT. Residues 624–648 show a composition bias toward low complexity; the sequence is NESQASSEQLSNSEQNSTSSGTSSA.

It belongs to the SMG8 family.

Functionally, involved in nonsense-mediated decay (NMD) of mRNAs containing premature stop codons. Probable component of kinase complex containing nonC and recruited to stalled ribosomes. The polypeptide is Nonsense-mediated mRNA decay factor SMG8 (Drosophila yakuba (Fruit fly)).